Consider the following 267-residue polypeptide: Membrane-spanning 4-domains subfamily A member 10 (267 aa).

Over 1-61 the chain is Cytoplasmic; that stretch reads MKAEATVIPS…KKSSLLKELG (61 aa). The helical transmembrane segment at 62–82 threads the bilayer; that stretch reads AFHITIALLHLVFGGYLASIV. Over 83 to 91 the chain is Extracellular; that stretch reads KNLHLVVLK. The chain crosses the membrane as a helical span at residues 92–112; that stretch reads SWYPFWGAASFLISGILAITM. Topologically, residues 113–121 are cytoplasmic; the sequence is KTFSKTYLK. The chain crosses the membrane as a helical span at residues 122–142; the sequence is MLCLMTNLISLFCVLSGLFVI. The Extracellular segment spans residues 143 to 171; the sequence is SKDLFLESPFESPIWRMYPNSTVHIQRLE. A helical transmembrane segment spans residues 172–192; that stretch reads LALLCFTVLELFLPVPTAVTA. Residues 193–267 are Cytoplasmic-facing; sequence WRGDCPSAKN…GAAIWTQTAN (75 aa).

It belongs to the MS4A family.

Its subcellular location is the membrane. In terms of biological role, may be involved in signal transduction as a component of a multimeric receptor complex. In Homo sapiens (Human), this protein is Membrane-spanning 4-domains subfamily A member 10 (MS4A10).